The sequence spans 83 residues: Putative defensin-like protein 66 (83 aa).

Positions 1–22 (MGSSRLMITFIVVAMLAISSDL) are cleaved as a signal peptide. 4 disulfide bridges follow: C38–C82, C42–C65, C51–C80, and C55–C81.

It belongs to the DEFL family.

It localises to the secreted. The sequence is that of Putative defensin-like protein 66 from Arabidopsis thaliana (Mouse-ear cress).